Here is a 441-residue protein sequence, read N- to C-terminus: tRNA-2-methylthio-N(6)-dimethylallyladenosine synthase (441 aa).

One can recognise an MTTase N-terminal domain in the interval Lys-2–Arg-117. Residues Cys-11, Cys-47, Cys-80, Cys-157, Cys-161, and Cys-164 each coordinate [4Fe-4S] cluster. Residues Lys-143 to Ala-374 enclose the Radical SAM core domain.

Belongs to the methylthiotransferase family. MiaB subfamily. Monomer. The cofactor is [4Fe-4S] cluster.

It is found in the cytoplasm. The enzyme catalyses N(6)-dimethylallyladenosine(37) in tRNA + (sulfur carrier)-SH + AH2 + 2 S-adenosyl-L-methionine = 2-methylsulfanyl-N(6)-dimethylallyladenosine(37) in tRNA + (sulfur carrier)-H + 5'-deoxyadenosine + L-methionine + A + S-adenosyl-L-homocysteine + 2 H(+). Catalyzes the methylthiolation of N6-(dimethylallyl)adenosine (i(6)A), leading to the formation of 2-methylthio-N6-(dimethylallyl)adenosine (ms(2)i(6)A) at position 37 in tRNAs that read codons beginning with uridine. In Ehrlichia canis (strain Jake), this protein is tRNA-2-methylthio-N(6)-dimethylallyladenosine synthase.